Consider the following 424-residue polypeptide: E3 ubiquitin-protein ligase RNF26 (424 aa).

5 helical membrane passes run leucine 24–tyrosine 44, glycine 60–leucine 80, isoleucine 157–leucine 177, valine 183–tryptophan 203, and valine 224–valine 244. The RING-type zinc-finger motif lies at cysteine 371–arginine 413.

Interacts with INCA1. Interacts with TMEM43, ENDOD1, TMEM33 and TMED1 to form a complex capable of modulating innate immune signaling through the cGAS-STING pathway. Interacts with UBE2J1; this interaction is important for SQSTM1 ubiquitination.

The protein localises to the endoplasmic reticulum membrane. The enzyme catalyses S-ubiquitinyl-[E2 ubiquitin-conjugating enzyme]-L-cysteine + [acceptor protein]-L-lysine = [E2 ubiquitin-conjugating enzyme]-L-cysteine + N(6)-ubiquitinyl-[acceptor protein]-L-lysine.. It functions in the pathway protein modification; protein ubiquitination. E3 ubiquitin-protein ligase that plays a key role in endosome organization by retaining vesicles in the perinuclear cloud. Acts as a platform for perinuclear positioning of the endosomal system by mediating ubiquitination of SQSTM1 through interaction with the ubiquitin conjugating enzyme UBE2J1. Ubiquitinated SQSTM1 attracts specific vesicle-associated adapters, forming a molecular bridge that restrains cognate vesicles in the perinuclear region and organizes the endosomal pathway for efficient cargo transport. Also acts as a regulator of type I interferon production in response to viral infection by mediating the formation of 'Lys-11'-linked polyubiquitin chains on TMEM173/STING, leading to stabilize TMEM173/STING. Also required to limit type I interferon response by promoting autophagic degradation of IRF3. The sequence is that of E3 ubiquitin-protein ligase RNF26 from Mus musculus (Mouse).